Reading from the N-terminus, the 64-residue chain is Large ribosomal subunit protein bL35 (64 aa).

It belongs to the bacterial ribosomal protein bL35 family.

The sequence is that of Large ribosomal subunit protein bL35 from Shewanella frigidimarina (strain NCIMB 400).